The sequence spans 437 residues: Phosphomethylpyrimidine synthase (437 aa).

Substrate-binding positions include Asn-69, Met-98, Tyr-127, His-163, 185-187, 226-229, and Glu-265; these read SRG and DACR. Position 269 (His-269) interacts with Zn(2+). Tyr-292 provides a ligand contact to substrate. Zn(2+) is bound at residue His-333. The [4Fe-4S] cluster site is built by Cys-409, Cys-412, and Cys-416.

The protein belongs to the ThiC family. Requires [4Fe-4S] cluster as cofactor.

It catalyses the reaction 5-amino-1-(5-phospho-beta-D-ribosyl)imidazole + S-adenosyl-L-methionine = 4-amino-2-methyl-5-(phosphooxymethyl)pyrimidine + CO + 5'-deoxyadenosine + formate + L-methionine + 3 H(+). The protein operates within cofactor biosynthesis; thiamine diphosphate biosynthesis. Catalyzes the synthesis of the hydroxymethylpyrimidine phosphate (HMP-P) moiety of thiamine from aminoimidazole ribotide (AIR) in a radical S-adenosyl-L-methionine (SAM)-dependent reaction. In Clostridium kluyveri (strain NBRC 12016), this protein is Phosphomethylpyrimidine synthase.